A 273-amino-acid chain; its full sequence is Putative pyruvate, phosphate dikinase regulatory protein (273 aa).

An ADP-binding site is contributed by 149–156 (GPSRTSKT).

Belongs to the pyruvate, phosphate/water dikinase regulatory protein family. PDRP subfamily.

It catalyses the reaction N(tele)-phospho-L-histidyl/L-threonyl-[pyruvate, phosphate dikinase] + ADP = N(tele)-phospho-L-histidyl/O-phospho-L-threonyl-[pyruvate, phosphate dikinase] + AMP + H(+). It carries out the reaction N(tele)-phospho-L-histidyl/O-phospho-L-threonyl-[pyruvate, phosphate dikinase] + phosphate + H(+) = N(tele)-phospho-L-histidyl/L-threonyl-[pyruvate, phosphate dikinase] + diphosphate. Bifunctional serine/threonine kinase and phosphorylase involved in the regulation of the pyruvate, phosphate dikinase (PPDK) by catalyzing its phosphorylation/dephosphorylation. In Rickettsia massiliae (strain Mtu5), this protein is Putative pyruvate, phosphate dikinase regulatory protein.